Reading from the N-terminus, the 109-residue chain is Parvalbumin beta (109 aa).

N-acetylalanine is present on A2. An igE-binding region spans residues 22–41 (AGSFDHKKFFKACGLSGKST). EF-hand domains are found at residues 39–74 (KSTDEVKKAFAIIDQDKSGFIEEEELKLFLQNFKAG) and 78–109 (LSDAETKAFLKAGDSDGDGKIGIDEFAAMIKG). Positions 52, 54, 56, 58, 60, 63, 91, 93, 95, 97, and 102 each coordinate Ca(2+).

It belongs to the parvalbumin family. In terms of processing, the N-terminus is blocked. In terms of tissue distribution, expressed in both white and dark muscles (at protein level). About eight and a half times lower expression in the dark muscle than in the white muscle (at protein level).

Its function is as follows. In muscle, parvalbumin is thought to be involved in relaxation after contraction. It binds two calcium ions. In Scomber japonicus (Chub mackerel), this protein is Parvalbumin beta.